The sequence spans 330 residues: Aspartate--ammonia ligase (330 aa).

The protein belongs to the class-II aminoacyl-tRNA synthetase family. AsnA subfamily.

The protein resides in the cytoplasm. It carries out the reaction L-aspartate + NH4(+) + ATP = L-asparagine + AMP + diphosphate + H(+). The protein operates within amino-acid biosynthesis; L-asparagine biosynthesis; L-asparagine from L-aspartate (ammonia route): step 1/1. The chain is Aspartate--ammonia ligase from Edwardsiella ictaluri (strain 93-146).